Consider the following 158-residue polypeptide: MKKKYYITISLIVAIAILIIDQVTKRIIATTMNIGDSYEVIPNFLNITSHRNNGAAWGILSGKMGFFYIITIVILIVLVLFYIKEAKYNLFMQVAISLLFAGALGNFIDRLVNGEVVDFVDTNIFGYDFPIFNVADSSLTIGVLFIIIALLKDANSKE.

Transmembrane regions (helical) follow at residues 4–24 (KYYI…DQVT), 63–83 (KMGF…LFYI), and 88–108 (YNLF…GNFI). Active-site residues include Asp118 and Asp136. A helical transmembrane segment spans residues 131–151 (IFNVADSSLTIGVLFIIIALL).

It belongs to the peptidase A8 family.

It localises to the cell membrane. It catalyses the reaction Release of signal peptides from bacterial membrane prolipoproteins. Hydrolyzes -Xaa-Yaa-Zaa-|-(S,diacylglyceryl)Cys-, in which Xaa is hydrophobic (preferably Leu), and Yaa (Ala or Ser) and Zaa (Gly or Ala) have small, neutral side chains.. It participates in protein modification; lipoprotein biosynthesis (signal peptide cleavage). Functionally, this protein specifically catalyzes the removal of signal peptides from prolipoproteins. This is Lipoprotein signal peptidase from Staphylococcus haemolyticus (strain JCSC1435).